Reading from the N-terminus, the 206-residue chain is Two-component response regulator ARR15 (206 aa).

The 128-residue stretch at His-19–Met-146 folds into the Response regulatory domain. Asp-79 carries the 4-aspartylphosphate modification. Residues Ala-151 to Gly-206 are disordered. Residues Asp-168–Val-187 are compositionally biased toward low complexity.

It belongs to the ARR family. Type-A subfamily. Post-translationally, two-component system major event consists of a His-to-Asp phosphorelay between a sensor histidine kinase (HK) and a response regulator (RR). In plants, the His-to-Asp phosphorelay involves an additional intermediate named Histidine-containing phosphotransfer protein (HPt). This multistep phosphorelay consists of a His-Asp-His-Asp sequential transfer of a phosphate group between first a His and an Asp of the HK protein, followed by the transfer to a conserved His of the HPt protein and finally the transfer to an Asp in the receiver domain of the RR protein.

It is found in the nucleus. Functions as a response regulator involved in His-to-Asp phosphorelay signal transduction system. Phosphorylation of the Asp residue in the receiver domain activates the ability of the protein to promote the transcription of target genes. Type-A response regulators seem to act as negative regulators of the cytokinin signaling. The protein is Two-component response regulator ARR15 (ARR15) of Arabidopsis thaliana (Mouse-ear cress).